Here is a 256-residue protein sequence, read N- to C-terminus: Probable ABC transporter ATP-binding protein SPy_0285/M5005_Spy0242 (256 aa).

The ABC transporter domain occupies 4–246 (LEINNLHVSI…EKEGYAGIAQ (243 aa)). Residue 36-43 (GPNGTGKS) coordinates ATP.

It belongs to the ABC transporter superfamily. Ycf16 family.

It localises to the cell membrane. The polypeptide is Probable ABC transporter ATP-binding protein SPy_0285/M5005_Spy0242 (Streptococcus pyogenes serotype M1).